The sequence spans 371 residues: NADP-dependent oxidoreductase lnaE (371 aa).

NADP(+)-binding positions include 172 to 175 (DEIG), K198, Y214, N237, 277 to 283 (YGTIAEQ), and 307 to 309 (FGL).

This sequence belongs to the NADP-dependent oxidoreductase L4BD family.

Its pathway is secondary metabolite biosynthesis. Its function is as follows. NADP-dependent oxidoreductase; part of the lna gene cluster that mediates the biosynthesis of diastereomeric piperazines. Lna and lnb clusters encode sets of enzymes that produce overlapping sets of previously undescribed metabolites such as piperazinomycin-like metabolites or morpholine. The lna and lnb biosynthetic pathways appear to be part of a signaling network that controls the formation of sclerotia, a resilient overwintering structure. One primary function of the non-canonical nonribosomal peptide synthetases lnaA and lnbA consists in the reduction of L-tyrosine. The presence in the clusters of tailoring enzymes such as the oxidoreductases lnaB, lnbB, lnaE or lnbE, as well as of the cytochrome P450 monooxygenases lnaC, lnaD, or lnbC, might explain formation of various diastereomeric piperazines. This Aspergillus flavus (strain ATCC 200026 / FGSC A1120 / IAM 13836 / NRRL 3357 / JCM 12722 / SRRC 167) protein is NADP-dependent oxidoreductase lnaE.